The primary structure comprises 303 residues: Putative deoxyribose-phosphate aldolase (303 aa).

Residue Asp157 is the Proton donor/acceptor of the active site. Residue Lys220 is the Schiff-base intermediate with acetaldehyde of the active site. The Proton donor/acceptor role is filled by Lys256.

Belongs to the DeoC/FbaB aldolase family. DeoC type 2 subfamily.

The catalysed reaction is 2-deoxy-D-ribose 5-phosphate = D-glyceraldehyde 3-phosphate + acetaldehyde. It functions in the pathway carbohydrate degradation; 2-deoxy-D-ribose 1-phosphate degradation; D-glyceraldehyde 3-phosphate and acetaldehyde from 2-deoxy-alpha-D-ribose 1-phosphate: step 2/2. In terms of biological role, catalyzes a reversible aldol reaction between acetaldehyde and D-glyceraldehyde 3-phosphate to generate 2-deoxy-D-ribose 5-phosphate. The chain is Putative deoxyribose-phosphate aldolase from Caenorhabditis elegans.